We begin with the raw amino-acid sequence, 444 residues long: Exodeoxyribonuclease 7 large subunit (444 aa).

It belongs to the XseA family. Heterooligomer composed of large and small subunits.

The protein localises to the cytoplasm. The enzyme catalyses Exonucleolytic cleavage in either 5'- to 3'- or 3'- to 5'-direction to yield nucleoside 5'-phosphates.. Its function is as follows. Bidirectionally degrades single-stranded DNA into large acid-insoluble oligonucleotides, which are then degraded further into small acid-soluble oligonucleotides. This Aliivibrio salmonicida (strain LFI1238) (Vibrio salmonicida (strain LFI1238)) protein is Exodeoxyribonuclease 7 large subunit.